Reading from the N-terminus, the 148-residue chain is Histone H2B.1 (148 aa).

A compositionally biased stretch (basic and acidic residues) spans 1–35 (MAPRAEKKPAEKKTAAERPVEENKAAEKAPAEKKP). The interval 1 to 56 (MAPRAEKKPAEKKTAAERPVEENKAAEKAPAEKKPKAGKKLPPKEAGDKKKKRSKK) is disordered. The residue at position 2 (A2) is a N,N,N-trimethylalanine; alternate. At A2 the chain carries N,N-dimethylalanine; alternate. Position 2 is an N-methylalanine; alternate (A2). K7 is subject to N6-acetyllysine; partial. N6-acetyllysine is present on K12. An N6,N6-dimethyllysine modification is found at K13. An N6-acetyllysine mark is found at K28, K33, and K39. K40 is subject to N6-acetyllysine; partial. K144 is covalently cross-linked (Glycyl lysine isopeptide (Lys-Gly) (interchain with G-Cter in ubiquitin)).

It belongs to the histone H2B family. As to quaternary structure, the nucleosome is a histone octamer containing two molecules each of H2A, H2B, H3 and H4 assembled in one H3-H4 heterotetramer and two H2A-H2B heterodimers. The octamer wraps approximately 147 bp of DNA. Interacts with AHL27. In terms of processing, can be acetylated to form H2BK6ac, H2BK33ac and H2BK34ac. Mono-, di- or trimethylated at the N-terminus to form H2BA1me1/2/3. H2BA1me2 may be acetylated to form H2BA1me2K6ac. Post-translationally, monoubiquitinated by BRE1 to form H2BK143ub1 and deubiquitinated by UBP26. Required for heterochromatic histone H3 di- and trimethylation at H3K4me. May give a specific tag for epigenetic transcriptional activation.

The protein localises to the nucleus. It is found in the chromosome. Its function is as follows. Core component of nucleosome. Nucleosomes wrap and compact DNA into chromatin, limiting DNA accessibility to the cellular machineries which require DNA as a template. Histones thereby play a central role in transcription regulation, DNA repair, DNA replication and chromosomal stability. DNA accessibility is regulated via a complex set of post-translational modifications of histones, also called histone code, and nucleosome remodeling. The polypeptide is Histone H2B.1 (Arabidopsis thaliana (Mouse-ear cress)).